The primary structure comprises 235 residues: MNAAIEHVQAVAFDLDGTLCDSVPDLAAAAEAMLEQLGMKPLPAKVVESYVGDGIGKLVHRVLTNDRDREADSELWEKGFVSYMKYYRDHLSVFTRPYPETEAGLALLKSLGIPLAVITNKNEILAAELLKQLGLADYFSLILGGDSLPEKKPSPLPLRHAAEVLGIDVANMVMVGDSRNDIIAAKAAGCLSVGVTFGYGDMTLLSQDDATRPDWIIGSLPEIYENLQPQKNKEE.

Asp-14 (nucleophile) is an active-site residue. Mg(2+) is bound by residues Asp-14, Asp-16, and Asp-177.

This sequence belongs to the HAD-like hydrolase superfamily. CbbY/CbbZ/Gph/YieH family. It depends on Mg(2+) as a cofactor.

It catalyses the reaction 2-phosphoglycolate + H2O = glycolate + phosphate. It participates in organic acid metabolism; glycolate biosynthesis; glycolate from 2-phosphoglycolate: step 1/1. Its function is as follows. Specifically catalyzes the dephosphorylation of 2-phosphoglycolate. Is involved in the dissimilation of the intracellular 2-phosphoglycolate formed during the DNA repair of 3'-phosphoglycolate ends, a major class of DNA lesions induced by oxidative stress. This is Phosphoglycolate phosphatase from Neisseria meningitidis serogroup A / serotype 4A (strain DSM 15465 / Z2491).